The following is a 51-amino-acid chain: Basic phospholipase A2 homolog BmatTX-I (51 aa).

Cys-28 and Cys-44 are oxidised to a cystine.

As to quaternary structure, monomer. Expressed by the venom gland.

It localises to the secreted. Snake venom phospholipase A2 homolog that lacks enzymatic activity. Shows high myotoxic activity, neutrophile activation (demonstrated by activation induction of IL-1beta production), slight cytotoxicity against Jurkat (leukemia T) and SK-BR-3 (breast adenocarcinoma) tumor cell lines, and slight antiparasitic activity against promastigote forms of Leishmania amazonensis. A model of myotoxic mechanism has been proposed: an apo Lys49-PLA2 is activated by the entrance of a hydrophobic molecule (e.g. fatty acid) at the hydrophobic channel of the protein leading to a reorientation of a monomer. This reorientation causes a transition between 'inactive' to 'active' states, causing alignment of C-terminal and membrane-docking sites (MDoS) side-by-side and putting the membrane-disruption sites (MDiS) in the same plane, exposed to solvent and in a symmetric position for both monomers. The MDoS region stabilizes the toxin on membrane by the interaction of charged residues with phospholipid head groups. Subsequently, the MDiS region destabilizes the membrane with penetration of hydrophobic residues. This insertion causes a disorganization of the membrane, allowing an uncontrolled influx of ions (i.e. calcium and sodium), and eventually triggering irreversible intracellular alterations and cell death. The sequence is that of Basic phospholipase A2 homolog BmatTX-I from Bothrops mattogrossensis (Pitviper).